The following is an 837-amino-acid chain: Protein translocase subunit SecA 1 (837 aa).

Residues Gln85, 103–107 (GEGKT), and Asp492 each bind ATP. A compositionally biased stretch (basic and acidic residues) spans 787-806 (QEVAKGEAVHPKEDGEEPKK). Positions 787-813 (QEVAKGEAVHPKEDGEEPKKKPIRKAV) are disordered. Cys821, Cys823, Cys832, and Cys833 together coordinate Zn(2+).

This sequence belongs to the SecA family. In terms of assembly, monomer and homodimer. Part of the essential Sec protein translocation apparatus which comprises SecA, SecYEG and auxiliary proteins SecDF. Other proteins may also be involved. It depends on Zn(2+) as a cofactor.

It localises to the cell membrane. The protein localises to the cytoplasm. It catalyses the reaction ATP + H2O + cellular proteinSide 1 = ADP + phosphate + cellular proteinSide 2.. Part of the Sec protein translocase complex. Interacts with the SecYEG preprotein conducting channel. Has a central role in coupling the hydrolysis of ATP to the transfer of proteins into and across the cell membrane, serving as an ATP-driven molecular motor driving the stepwise translocation of polypeptide chains across the membrane. The protein is Protein translocase subunit SecA 1 of Geobacillus thermodenitrificans (strain NG80-2).